We begin with the raw amino-acid sequence, 1013 residues long: Polyprotein of EF-Ts, chloroplastic (1013 aa).

The transit peptide at 1 to 43 (MLRELGRTATVKAHGRSVLRPVRGPAGRRQVAFTGVRPSVRVF) directs the protein to the chloroplast. In terms of domain architecture, S1 motif 1 spans 64–133 (GSEYEGTVTT…EKKRVSLELK (70 aa)). Acidic residues predominate over residues 141–150 (SAEESDDIIT). Residues 141-163 (SAEESDDIITEPDREGADATDDD) form a disordered region. The S1 motif 2 domain occupies 227–331 (MEEVTGKVAR…DGRGISLTHF (105 aa)). The segment at 772-798 (QAKAAAPAAPKKEEPKKEEPKKATVAV) is disordered. Basic and acidic residues predominate over residues 781-793 (PKKEEPKKEEPKK).

Belongs to the EF-Ts family. As to quaternary structure, component of the chloroplast ribosome 30S and 70S subunits, as well as polysomes. Component of the chloroplast ribosome 70S subunit, and at low levels, present in polysomes. In terms of assembly, associates transiently with chloroplast polysomes.

Its subcellular location is the plastid. The protein localises to the chloroplast. Functionally, associates with the EF-Tu.GDP complex and induces the exchange of GDP to GTP. It remains bound to the aminoacyl-tRNA.EF-Tu.GTP complex up to the GTP hydrolysis stage on the ribosome. Binds to psbD and psbA mRNAs 5'-untranslated regions (UTRs) in vitro. The protein is Polyprotein of EF-Ts, chloroplastic of Chlamydomonas reinhardtii (Chlamydomonas smithii).